Here is a 31-residue protein sequence, read N- to C-terminus: 23S rRNA methylase leader peptide (31 aa).

Functionally, this peptide is involved in the control mechanism of the synthesis of the erythromycin resistance protein. The sequence is that of 23S rRNA methylase leader peptide (ermC) from Escherichia coli.